The sequence spans 431 residues: Forkhead box protein N2 (431 aa).

The fork-head DNA-binding region spans 112–208; the sequence is KPPYSFSLLI…QALKKQPFSS (97 aa). Residues 364-387 form a disordered region; it reads DSGYASQPCAKISEKGQSGKKMRK.

It is found in the nucleus. Its function is as follows. Binds to the purine-rich region in HTLV-I LTR. The polypeptide is Forkhead box protein N2 (FOXN2) (Homo sapiens (Human)).